A 673-amino-acid chain; its full sequence is Acetoacetyl-CoA synthetase (673 aa).

This sequence belongs to the ATP-dependent AMP-binding enzyme family.

It localises to the cytoplasm. It is found in the cytosol. The catalysed reaction is acetoacetate + ATP + CoA = acetoacetyl-CoA + AMP + diphosphate. In terms of biological role, converts acetoacetate to acetoacetyl-CoA in the cytosol. Ketone body-utilizing enzyme, responsible for the synthesis of cholesterol and fatty acids. The protein is Acetoacetyl-CoA synthetase (aacs) of Danio rerio (Zebrafish).